Here is a 1097-residue protein sequence, read N- to C-terminus: Protein toll (1097 aa).

The N-terminal stretch at M1 to A27 is a signal peptide. The Extracellular portion of the chain corresponds to S28 to I807. 3 disulfides stabilise this stretch: C34–C45, C43–C56, and C79–C107. N-linked (GlcNAc...) asparagine glycans are attached at residues N80, N140, and N175. LRR repeat units lie at residues N175–D195, N198–K219, K222–G243, S246–H267, N270–H291, H294–L314, E320–H340, Q343–H364, N367–H388, N391–N412, N415–S436, G439–M460, G474–T495, Q498–S521, and N523–H544. N235 carries N-linked (GlcNAc...) asparagine glycosylation. N270 and N275 each carry an N-linked (GlcNAc...) asparagine glycan. Residue N346 is glycosylated (N-linked (GlcNAc...) asparagine). Residue N391 is glycosylated (N-linked (GlcNAc...) asparagine). N482, N508, and N528 each carry an N-linked (GlcNAc...) asparagine glycan. In terms of domain architecture, LRRCT 1 spans N561–L620. 4 disulfides stabilise this stretch: C565–C597, C567–C618, C631–C637, and C635–C650. The region spanning F622–N663 is the LRRNT domain. N-linked (GlcNAc...) asparagine glycosylation is found at N654, N677, N703, N715, N730, and N738. LRR repeat units lie at residues Q669–G690, S693–P713, and N715–N738. Positions N751–A801 constitute an LRRCT 2 domain. 2 disulfide bridges follow: C755/C781 and C757/C799. The chain crosses the membrane as a helical span at residues A808–Y828. The Cytoplasmic segment spans residues K829–V1097. Positions K857–L993 constitute a TIR domain.

The protein belongs to the Toll-like receptor family. As to quaternary structure, in the absence of ligand, forms a low-affinity disulfide-linked homodimer. In the presence of ligand, crystal structures show one Tl molecule bound to a spaetzle C-106 homodimer. However, the active complex probably consists of two Tl molecules bound to a spaetzle C-106 homodimer. This is supported by in vitro experiments which also show binding of the spaetzle C-106 dimer to 2 Tl receptors. Ligand binding induces conformational changes in the extracellular domain of Tl. This may enable a secondary homodimerization interface at the C-terminus of the Tl extracellular domain. In early embryos, concentrated in the pseudocleavage furrows that form transiently between nuclei before cellularization and in the cleavage furrows during cellularization (at protein level). Later, found on cells in the mesectoderm, stomodeum, proctodeum, anterior and posterior midguts, splanchnopleura, salivary gland placode and adjacent to the segmentally repeated tracheal placodes (at protein level). During and after germ band shortening, localized in a number of cell types, including the salivary gland, foregut, hindgut, Malpighian tubules and epidermis (at protein level). In embryos, high expression in M13 with comparatively low expression in M12.

It is found in the cell membrane. Its subcellular location is the cytoplasm. Receptor for the cleaved activated form of spz, spaetzle C-106. Binding to spaetzle C-106 activates the Toll signaling pathway and induces expression of the antifungal peptide drosomycin. Component of the extracellular signaling pathway that establishes dorsal-ventral polarity in the embryo. Promotes heterophilic cellular adhesion. Involved in synaptic targeting of motoneurons RP5 and V to muscle 12 (M12); functions as a repulsive cue inhibiting motoneuron synapse formation on muscle 13 (M13) to guide RP5 and V to the neighboring M12, where its expression is repressed by tey. May also function in embryonic neuronal survival and the synaptic targeting of SNa motoneurons. This chain is Protein toll, found in Drosophila melanogaster (Fruit fly).